The primary structure comprises 154 residues: MAYLELDLQIATEETANLPSEADFRLWVEKALPEVDEEFEVTIRIVDEEESHALNHEYRGKDKPTNVLSFPFEAPPGLELPLLGDLVICAQIVAKEAAEQNKELFHHWAHMTIHGILHLRGYDHINDDEADEMESIETELLASLSISDPYLIKE.

Zn(2+)-binding residues include His114, His118, and His124.

The protein belongs to the endoribonuclease YbeY family. Zn(2+) is required as a cofactor.

Its subcellular location is the cytoplasm. Single strand-specific metallo-endoribonuclease involved in late-stage 70S ribosome quality control and in maturation of the 3' terminus of the 16S rRNA. The protein is Endoribonuclease YbeY of Marinomonas sp. (strain MWYL1).